Reading from the N-terminus, the 162-residue chain is 2-amino-4-hydroxy-6-hydroxymethyldihydropteridine pyrophosphokinase (162 aa).

The protein belongs to the HPPK family.

It carries out the reaction 6-hydroxymethyl-7,8-dihydropterin + ATP = (7,8-dihydropterin-6-yl)methyl diphosphate + AMP + H(+). The protein operates within cofactor biosynthesis; tetrahydrofolate biosynthesis; 2-amino-4-hydroxy-6-hydroxymethyl-7,8-dihydropteridine diphosphate from 7,8-dihydroneopterin triphosphate: step 4/4. Functionally, catalyzes the transfer of pyrophosphate from adenosine triphosphate (ATP) to 6-hydroxymethyl-7,8-dihydropterin, an enzymatic step in folate biosynthesis pathway. The chain is 2-amino-4-hydroxy-6-hydroxymethyldihydropteridine pyrophosphokinase (folK) from Streptococcus pyogenes serotype M3 (strain ATCC BAA-595 / MGAS315).